The primary structure comprises 503 residues: Probable mitochondrial-processing peptidase subunit alpha-1, mitochondrial (503 aa).

A mitochondrion-targeting transit peptide spans 1–59 (MYRTAASRARALKGVLTRSLRPARYASSSAVAETSSSTPAYLSWLSGGSRAALTSLDMP).

This sequence belongs to the peptidase M16 family. In terms of assembly, heterodimer of alpha and beta subunits, forming the mitochondrial processing protease (MPP) in which subunit alpha is involved in substrate recognition and binding and subunit beta is the catalytic subunit. Component of the ubiquinol-cytochrome c oxidoreductase (cytochrome b-c1 complex, complex III, CIII), a multisubunit enzyme composed of 10 subunits. The complex is composed of 3 respiratory subunits cytochrome b (MT-CYB), cytochrome c1 (CYC1-1 or CYC1-2) and Rieske protein (UCR1-1 or UCR1-2), 2 core protein subunits MPPalpha1 (or MPPalpha2) and MPPB, and 5 low-molecular weight protein subunits QCR7-1 (or QCR7-2), UCRQ-1 (or UCRQ-2), QCR9, UCRY and probably QCR6-1 (or QCR6-2). The complex exists as an obligatory dimer and forms supercomplexes (SCs) in the inner mitochondrial membrane with NADH-ubiquinone oxidoreductase (complex I, CI), resulting in different assemblies (supercomplexes SCI(1)III(2) and SCI(2)III(4)).

It localises to the mitochondrion matrix. It is found in the mitochondrion inner membrane. Its function is as follows. Substrate recognition and binding subunit of the essential mitochondrial processing protease (MPP), which cleaves the mitochondrial sequence off newly imported precursors proteins. Component of the ubiquinol-cytochrome c oxidoreductase, a multisubunit transmembrane complex that is part of the mitochondrial electron transport chain which drives oxidative phosphorylation. The respiratory chain contains 3 multisubunit complexes succinate dehydrogenase (complex II, CII), ubiquinol-cytochrome c oxidoreductase (cytochrome b-c1 complex, complex III, CIII) and cytochrome c oxidase (complex IV, CIV), that cooperate to transfer electrons derived from NADH and succinate to molecular oxygen, creating an electrochemical gradient over the inner membrane that drives transmembrane transport and the ATP synthase. The cytochrome b-c1 complex catalyzes electron transfer from ubiquinol to cytochrome c, linking this redox reaction to translocation of protons across the mitochondrial inner membrane, with protons being carried across the membrane as hydrogens on the quinol. In the process called Q cycle, 2 protons are consumed from the matrix, 4 protons are released into the intermembrane space and 2 electrons are passed to cytochrome c. The polypeptide is Probable mitochondrial-processing peptidase subunit alpha-1, mitochondrial (MPPalpha1) (Arabidopsis thaliana (Mouse-ear cress)).